Consider the following 260-residue polypeptide: HTH-type transcriptional repressor NanR (260 aa).

The interval 1–21 is disordered; that stretch reads MSAFDHSSDDTQETIGNSLRR. One can recognise an HTH gntR-type domain in the interval 27–95; that stretch reads KKLSEMVEEE…NGERARVSRP (69 aa). Residues 55-74 constitute a DNA-binding region (H-T-H motif); that stretch reads ERELMAFFNVGRPSVREALA.

It belongs to the NanR family.

Transcriptional repressor that controls expression of the genes required for the catabolism of sialic acids. This chain is HTH-type transcriptional repressor NanR, found in Klebsiella aerogenes (strain ATCC 13048 / DSM 30053 / CCUG 1429 / JCM 1235 / KCTC 2190 / NBRC 13534 / NCIMB 10102 / NCTC 10006 / CDC 819-56) (Enterobacter aerogenes).